The chain runs to 72 residues: Translation initiation factor IF-1 (72 aa).

The 72-residue stretch at 1 to 72 (MAKEENIEMQ…SKGRIIFRAR (72 aa)) folds into the S1-like domain.

Belongs to the IF-1 family. Component of the 30S ribosomal translation pre-initiation complex which assembles on the 30S ribosome in the order IF-2 and IF-3, IF-1 and N-formylmethionyl-tRNA(fMet); mRNA recruitment can occur at any time during PIC assembly.

It is found in the cytoplasm. In terms of biological role, one of the essential components for the initiation of protein synthesis. Stabilizes the binding of IF-2 and IF-3 on the 30S subunit to which N-formylmethionyl-tRNA(fMet) subsequently binds. Helps modulate mRNA selection, yielding the 30S pre-initiation complex (PIC). Upon addition of the 50S ribosomal subunit IF-1, IF-2 and IF-3 are released leaving the mature 70S translation initiation complex. This chain is Translation initiation factor IF-1, found in Colwellia psychrerythraea (strain 34H / ATCC BAA-681) (Vibrio psychroerythus).